Reading from the N-terminus, the 738-residue chain is Glycogen [starch] synthase, muscle (738 aa).

At S8 the chain carries Phosphoserine; by AMPK and PKA. S11 is subject to Phosphoserine. K39 lines the UDP pocket. Positions 205 and 211 each coordinate UDP-alpha-D-glucose. H291, E292, Q294, H297, and K301 together coordinate alpha-D-glucose 6-phosphate. UDP is bound at residue R331. R331 provides a ligand contact to UDP-alpha-D-glucose. A Phosphoserine modification is found at S412. H501 provides a ligand contact to alpha-D-glucose 6-phosphate. UDP-alpha-D-glucose contacts are provided by E510, W512, and G513. T515 lines the UDP pocket. Alpha-D-glucose 6-phosphate-binding residues include R582 and R586. Residues 632 to 738 (QGYRYPRPAS…PTSSLGEERN (107 aa)) are disordered. S641 and S645 each carry phosphoserine. S649 is modified (phosphoserine; by GSK3-alpha and GSK3-beta). A phosphoserine mark is found at S652, S653, S657, and S672. Over residues 682 to 695 (AKDRRNIRAPEWPR) the composition is skewed to basic and acidic residues. Residues S698, S709, and S711 each carry the phosphoserine modification. Positions 698–738 (SCSSSTGGSKRSNSVDTGPSSSLSTPTEPLSPTSSLGEERN) are enriched in low complexity. T722 is subject to Phosphothreonine. Residues S728 and S732 each carry the phosphoserine modification.

This sequence belongs to the glycosyltransferase 3 family. As to quaternary structure, part of the GYS1-GYG1 complex, a heterooctamer composed of a tetramer of GYS1 and 2 dimers of GYG1, where each GYS1 protomer binds to one GYG1 subunit (via GYG1 C-terminus); the GYS1 tetramer may dissociate from GYG1 dimers to continue glycogen polymerization on its own. Phosphorylation at Ser-8 by AMPK inactivates the enzyme activity. Primed phosphorylation at Ser-657 (site 5) by CSNK2A1 and CSNK2A2 is required for inhibitory phosphorylation at Ser-641 (site 3a), Ser-645 (site 3b), Ser-649 (site 3c) and Ser-653 (site 4) by GSK3A an GSK3B. Phosphorylated at Ser-641 by PASK, leading to inactivation; phosphorylation by PASK is inhibited by glycogen. Phosphorylated at Ser-641 by DYRK2, leading to inactivation. Dephosphorylation at Ser-641 and Ser-645 by PP1 activates the enzyme.

The enzyme catalyses [(1-&gt;4)-alpha-D-glucosyl](n) + UDP-alpha-D-glucose = [(1-&gt;4)-alpha-D-glucosyl](n+1) + UDP + H(+). It participates in glycan biosynthesis; glycogen biosynthesis. Its activity is regulated as follows. Allosteric activation by glucose-6-phosphate. Phosphorylation reduces the activity towards UDP-glucose. When in the non-phosphorylated state, glycogen synthase does not require glucose-6-phosphate as an allosteric activator; when phosphorylated it does. Its function is as follows. Glycogen synthase participates in the glycogen biosynthetic process along with glycogenin and glycogen branching enzyme. Extends the primer composed of a few glucose units formed by glycogenin by adding new glucose units to it. In this context, glycogen synthase transfers the glycosyl residue from UDP-Glc to the non-reducing end of alpha-1,4-glucan. This is Glycogen [starch] synthase, muscle (Gys1) from Rattus norvegicus (Rat).